The following is a 513-amino-acid chain: Cytochrome P450 monooxygenase asaD (513 aa).

Residues 14-34 form a helical membrane-spanning segment; that stretch reads ILYPFLFGIFAVASLCIATLL. Asn-258, Asn-370, Asn-431, and Asn-441 each carry an N-linked (GlcNAc...) asparagine glycan. Residue Cys-461 participates in heme binding.

The protein belongs to the cytochrome P450 family. It depends on heme as a cofactor.

It is found in the membrane. Its pathway is secondary metabolite biosynthesis. Cytochrome P450 monooxygenase; part of the gene cluster that mediates the biosynthesis of aspergillic acid, a hydroxamic acid-containing pyrazinone with aliphatic side chains that originates from leucine (Leu) and isoleucine (Ile). Aspergillic acid has antibiotic properties and was shown to be lethal to mice. The first step in the pathway is the production of deoxyaspergillic acid via a condensation between the Ile amine and the Leu carboxylic acid, followed by a reductive release from the protein forming the dipeptide aldehyde NH(2)-Leu-Ile-CHO, which could undergo an intermolecular cyclization resulting in a dihydropyrazinone. As the NRPS asaC lacks a condensation domain, it is improbable that it is responsible for condensation of Leu and Ile. One possibility is that asaC acts on a previously condensed dipeptide and functions as a Leu-Ile reductase to yield deoxyaspergillic acid. After asaC forms deoxyaspergillic acid, the cytochrome P450 asaD oxidizes the pyrazinone to the hydroxamic acid-containing bioactive metabolite aspergillic acid. The hydroxylase/desaturase asaB can then convert aspergillic acid to hydroxyaspergillic acid. Both aspergillic acid and hydroxyaspergillic acid can form complexes with iron producing ferriaspergillin analogs. The sequence is that of Cytochrome P450 monooxygenase asaD from Aspergillus flavus (strain ATCC 200026 / FGSC A1120 / IAM 13836 / NRRL 3357 / JCM 12722 / SRRC 167).